The sequence spans 989 residues: Phosphoenolpyruvate carboxylase (989 aa).

Catalysis depends on residues histidine 175 and lysine 630.

The protein belongs to the PEPCase type 1 family. The cofactor is Mg(2+).

The enzyme catalyses oxaloacetate + phosphate = phosphoenolpyruvate + hydrogencarbonate. Forms oxaloacetate, a four-carbon dicarboxylic acid source for the tricarboxylic acid cycle. The polypeptide is Phosphoenolpyruvate carboxylase (Prochlorococcus marinus (strain MIT 9312)).